Consider the following 313-residue polypeptide: MTHNQELIETIIADQVHQELHSIQDFLRWTYSTFNRSDIYYGHGYNNAWDEALQLILTTLALPIDFPNEYYAAHLTRSEKEVLLRLIIQRLEKRIPVAYLTHQAWFCGLNFYVDERVIVPRSPISALIQEGFAPLLPQEPKRILDMCTGSGCIAIACAERFPEAEVDAVDLSSDALDVAQINIERHNMLDRVYPIQSDLFHDLAKDQYDLIVANPPYVDLEDLSDMPAEFHHEPEMALGSGVDGLEITKKILYAAPDYLTEQGVLVCEVGNSMVHLIEQYPDVPFNWVELKNGGVGVFALTQAELMQYRHLFQ.

This sequence belongs to the protein N5-glutamine methyltransferase family. PrmB subfamily.

The enzyme catalyses L-glutaminyl-[ribosomal protein uL3] + S-adenosyl-L-methionine = N(5)-methyl-L-glutaminyl-[ribosomal protein uL3] + S-adenosyl-L-homocysteine + H(+). Its function is as follows. Methylates large ribosomal subunit protein uL3 on a specific glutamine residue. The chain is Ribosomal protein uL3 glutamine methyltransferase from Pasteurella multocida (strain Pm70).